A 221-amino-acid polypeptide reads, in one-letter code: Thiamine-phosphate synthase (221 aa).

Residues 46 to 50 (QFREK) and N83 each bind 4-amino-2-methyl-5-(diphosphooxymethyl)pyrimidine. Mg(2+) contacts are provided by D84 and D103. 4-amino-2-methyl-5-(diphosphooxymethyl)pyrimidine is bound at residue S122. Residue 149–151 (TQS) coordinates 2-[(2R,5Z)-2-carboxy-4-methylthiazol-5(2H)-ylidene]ethyl phosphate. K152 contributes to the 4-amino-2-methyl-5-(diphosphooxymethyl)pyrimidine binding site. 2-[(2R,5Z)-2-carboxy-4-methylthiazol-5(2H)-ylidene]ethyl phosphate is bound by residues G181 and 201–202 (IS).

The protein belongs to the thiamine-phosphate synthase family. Mg(2+) is required as a cofactor.

The catalysed reaction is 2-[(2R,5Z)-2-carboxy-4-methylthiazol-5(2H)-ylidene]ethyl phosphate + 4-amino-2-methyl-5-(diphosphooxymethyl)pyrimidine + 2 H(+) = thiamine phosphate + CO2 + diphosphate. It carries out the reaction 2-(2-carboxy-4-methylthiazol-5-yl)ethyl phosphate + 4-amino-2-methyl-5-(diphosphooxymethyl)pyrimidine + 2 H(+) = thiamine phosphate + CO2 + diphosphate. The enzyme catalyses 4-methyl-5-(2-phosphooxyethyl)-thiazole + 4-amino-2-methyl-5-(diphosphooxymethyl)pyrimidine + H(+) = thiamine phosphate + diphosphate. Its pathway is cofactor biosynthesis; thiamine diphosphate biosynthesis; thiamine phosphate from 4-amino-2-methyl-5-diphosphomethylpyrimidine and 4-methyl-5-(2-phosphoethyl)-thiazole: step 1/1. In terms of biological role, condenses 4-methyl-5-(beta-hydroxyethyl)thiazole monophosphate (THZ-P) and 2-methyl-4-amino-5-hydroxymethyl pyrimidine pyrophosphate (HMP-PP) to form thiamine monophosphate (TMP). In Actinobacillus succinogenes (strain ATCC 55618 / DSM 22257 / CCUG 43843 / 130Z), this protein is Thiamine-phosphate synthase.